Reading from the N-terminus, the 364-residue chain is Lysophosphatidic acid receptor 1 (364 aa).

Residues 1-50 (MAAAFTSSPVVSQPQFTAMNEQQCFSNESIAFFYNRSGKYLATEWNTVTK) lie on the Extracellular side of the membrane. 2 disulfide bridges follow: C24–C190 and C188–C195. N-linked (GlcNAc...) asparagine glycosylation is found at N27 and N35. Position 39 (K39) interacts with a 1-acyl-sn-glycero-3-phosphate. The helical transmembrane segment at 51 to 75 (LVMGLGITVCIFIMLANLLVMVAIY) threads the bilayer. Topologically, residues 76–83 (VNRRFHFP) are cytoplasmic. A helical membrane pass occupies residues 84–107 (IYYLMANLAAADFFAGLAYFYLMF). Topologically, residues 108–121 (NTGPNTRRLTVSTW) are extracellular. Residues 122-144 (LLRQGLIDTSLTVSVANLLAIAI) form a helical membrane-spanning segment. Residue 124-129 (RQGLID) coordinates a 1-acyl-sn-glycero-3-phosphate. At 145–163 (ERHITVFRMQLHARMSNRR) the chain is on the cytoplasmic side. A helical transmembrane segment spans residues 164-184 (VVVVIVVIWTMAIVMGAIPSV). Over 185 to 204 (GWNCICDIENCSNMAPLYSD) the chain is Extracellular. A helical transmembrane segment spans residues 205 to 225 (SYLVFWAIFNLVTFVVMVVLY). W210 lines the a 1-acyl-sn-glycero-3-phosphate pocket. Residues 226-255 (AHIFGYVRQRTMRMSRHSSGPRRNRDTMMS) are Cytoplasmic-facing. A helical transmembrane segment spans residues 256-280 (LLKTVVIVLGAFIICWTPGLVLLLL). Residues 281–294 (DVCCPQCDVLAYEK) are Extracellular-facing. A disulfide bridge links C284 with C287. Residues 295–315 (FFLLLAEFNSAMNPIIYSYRD) traverse the membrane as a helical segment. Topologically, residues 316-364 (KEMSATFRQILCCQRSENTSGPTEGSDRSASSLNHTILAGVHSNDHSVV) are cytoplasmic. Position 341 is a phosphoserine (S341). T351 carries the phosphothreonine modification.

The protein belongs to the G-protein coupled receptor 1 family. In terms of assembly, interacts with RALA and GRK2. Interacts with GNAQ and GNA13. Interacts with CD14; the interaction is enhanced by exposure to bacterial lipopolysaccharide (LPS). Post-translationally, N-glycosylated.

The protein localises to the cell surface. The protein resides in the cell membrane. It is found in the endosome. Functionally, receptor for lysophosphatidic acid (LPA). Plays a role in the reorganization of the actin cytoskeleton, cell migration, differentiation and proliferation, and thereby contributes to the responses to tissue damage and infectious agents. Activates downstream signaling cascades via the G(i)/G(o), G(12)/G(13), and G(q) families of heteromeric G proteins. Signaling inhibits adenylyl cyclase activity and decreases cellular cAMP levels. Signaling triggers an increase of cytoplasmic Ca(2+) levels. Activates RALA; this leads to the activation of phospholipase C (PLC) and the formation of inositol 1,4,5-trisphosphate. Signaling mediates activation of down-stream MAP kinases. Contributes to the regulation of cell shape. Promotes Rho-dependent reorganization of the actin cytoskeleton in neuronal cells and neurite retraction. Promotes the activation of Rho and the formation of actin stress fibers. Promotes formation of lamellipodia at the leading edge of migrating cells via activation of RAC1. Through its function as LPA receptor, plays a role in chemotaxis and cell migration, including responses to injury and wounding. Plays a role in triggering inflammation in response to bacterial lipopolysaccharide (LPS) via its interaction with CD14. Promotes cell proliferation in response to LPA. Inhibits the intracellular ciliogenesis pathway in response to LPA and through AKT1 activation. Required for normal skeleton development. May play a role in osteoblast differentiation. Required for normal brain development. Required for normal proliferation, survival and maturation of newly formed neurons in the adult dentate gyrus. Plays a role in pain perception and in the initiation of neuropathic pain. This Bos taurus (Bovine) protein is Lysophosphatidic acid receptor 1 (LPAR1).